We begin with the raw amino-acid sequence, 552 residues long: Urocanate hydratase (552 aa).

NAD(+)-binding positions include Gly-49–Gly-50, Gln-127, Gly-173–Gly-175, Glu-193, Arg-198, Asn-239–Ala-240, Gln-260–His-264, Tyr-270–Val-271, and Tyr-319. The active site involves Cys-407. Gly-489 contacts NAD(+).

Belongs to the urocanase family. Composed of at least two subunits. The cofactor is NAD(+).

The protein localises to the cytoplasm. It carries out the reaction 4-imidazolone-5-propanoate = trans-urocanate + H2O. The protein operates within amino-acid degradation; L-histidine degradation into L-glutamate; N-formimidoyl-L-glutamate from L-histidine: step 2/3. Functionally, catalyzes the conversion of urocanate to 4-imidazolone-5-propionate. The chain is Urocanate hydratase from Bacillus subtilis (strain 168).